We begin with the raw amino-acid sequence, 543 residues long: Malate synthase (543 aa).

Residue Arg-162 is the Proton acceptor of the active site. Residue Asp-449 is the Proton donor of the active site.

Belongs to the malate synthase family.

It catalyses the reaction glyoxylate + acetyl-CoA + H2O = (S)-malate + CoA + H(+). The protein operates within carbohydrate metabolism; glyoxylate cycle; (S)-malate from isocitrate: step 2/2. In Dictyostelium discoideum (Social amoeba), this protein is Malate synthase (masA).